A 294-amino-acid polypeptide reads, in one-letter code: Small ribosomal subunit protein uS2 (294 aa).

Residues 261–274 are compositionally biased toward basic and acidic residues; the sequence is MDEDADSKKSKAEE. The segment at 261-294 is disordered; the sequence is MDEDADSKKSKAEEPVIPTAEEPAITTIEVDQNE.

The protein belongs to the universal ribosomal protein uS2 family.

The chain is Small ribosomal subunit protein uS2 from Leptospira borgpetersenii serovar Hardjo-bovis (strain JB197).